The primary structure comprises 794 residues: Phosphoribosylformylglycinamidine synthase subunit PurL (794 aa).

His47 is an active-site residue. ATP is bound by residues Tyr50 and Lys89. Glu91 contacts Mg(2+). Substrate contacts are provided by residues 92–95 (SHNH) and Arg114. The active-site Proton acceptor is His93. Asp115 contacts Mg(2+). Substrate is bound at residue Gln238. Residue Asp266 participates in Mg(2+) binding. Substrate is bound at residue 310-312 (ESQ). The ATP site is built by Asp522 and Gly559. Asn560 lines the Mg(2+) pocket. A substrate-binding site is contributed by Ser562.

This sequence belongs to the FGAMS family. As to quaternary structure, monomer. Part of the FGAM synthase complex composed of 1 PurL, 1 PurQ and 2 PurS subunits.

It localises to the cytoplasm. It catalyses the reaction N(2)-formyl-N(1)-(5-phospho-beta-D-ribosyl)glycinamide + L-glutamine + ATP + H2O = 2-formamido-N(1)-(5-O-phospho-beta-D-ribosyl)acetamidine + L-glutamate + ADP + phosphate + H(+). Its pathway is purine metabolism; IMP biosynthesis via de novo pathway; 5-amino-1-(5-phospho-D-ribosyl)imidazole from N(2)-formyl-N(1)-(5-phospho-D-ribosyl)glycinamide: step 1/2. Functionally, part of the phosphoribosylformylglycinamidine synthase complex involved in the purines biosynthetic pathway. Catalyzes the ATP-dependent conversion of formylglycinamide ribonucleotide (FGAR) and glutamine to yield formylglycinamidine ribonucleotide (FGAM) and glutamate. The FGAM synthase complex is composed of three subunits. PurQ produces an ammonia molecule by converting glutamine to glutamate. PurL transfers the ammonia molecule to FGAR to form FGAM in an ATP-dependent manner. PurS interacts with PurQ and PurL and is thought to assist in the transfer of the ammonia molecule from PurQ to PurL. The chain is Phosphoribosylformylglycinamidine synthase subunit PurL from Prochlorococcus marinus (strain MIT 9303).